The primary structure comprises 396 residues: Beta-1,3-N-acetylglucosaminyltransferase radical fringe (396 aa).

The Cytoplasmic segment spans residues 1-6 (MNFSCL). A helical; Signal-anchor for type II membrane protein membrane pass occupies residues 7 to 27 (GLSKICFLVSVIFCTFLLLFI). Topologically, residues 28–396 (PKTKTPWRPR…THWCPPRKTR (369 aa)) are lumenal. N-linked (GlcNAc...) asparagine glycosylation is found at Asn-49 and Asn-120. A substrate-binding site is contributed by Arg-145. Residue Asn-184 is glycosylated (N-linked (GlcNAc...) asparagine). 2 cysteine pairs are disulfide-bonded: Cys-185–Cys-196 and Cys-214–Cys-277. Residue Asp-218 coordinates substrate. Position 219 (Asp-219) interacts with Mn(2+). Asp-307 is an active-site residue. Mn(2+) is bound at residue His-331. An intrachain disulfide couples Cys-381 to Cys-390.

It belongs to the glycosyltransferase 31 family. Mn(2+) serves as cofactor. Detected in the mesanchymal region of the developing limb. Expressed in mesoderm but not in ectoderm with no evident boundary of expression.

It localises to the golgi apparatus membrane. The enzyme catalyses 3-O-(alpha-L-fucosyl)-L-threonyl-[EGF-like domain protein] + UDP-N-acetyl-alpha-D-glucosamine = 3-O-(N-acetyl-beta-D-glucosaminyl-(1-&gt;3)-alpha-L-fucosyl)-L-threonyl-[EGF-like domain protein] + UDP + H(+). It catalyses the reaction 3-O-(alpha-L-fucosyl)-L-seryl-[EGF-like domain protein] + UDP-N-acetyl-alpha-D-glucosamine = 3-O-(N-acetyl-beta-D-glucosaminyl-(1-&gt;3)-alpha-L-fucosyl)-L-seryl-[EGF-like domain protein] + UDP + H(+). In terms of biological role, glycosyltransferase that initiates the elongation of O-linked fucose residues attached to EGF-like repeats in the extracellular domain of Notch molecules. Involved in forelimb development and in adult forelimb regeneration. The protein is Beta-1,3-N-acetylglucosaminyltransferase radical fringe (RFNG) of Notophthalmus viridescens (Eastern newt).